The sequence spans 455 residues: MNCEVKHALHCAVLVAWIVCFAYFCGVFTEPAEGTVPESPVASYGLVWTICLYLLRFTALLVLPQCLCNLCGLMMFNAFREKVQLKAAPLLSPFVCFRVVTKGNFPLLVKENIDANMKTCFEAGMENFIFEVVTDKAINLPPNPRVREVVVPTAYRTKSGAKFKARALQYCLEDDVNILQPTDWIVHLDEETLLTTNAICGILNFCEDGKHQFGQGVITYANGDIVNWLTTLSDSFRVADDMGKLRFQFKLFHKPLFGWKGSYVVTQVEAERDVSYDHGMEGSIAEDCFFSMVAMKHGYTFDFIEGEMHEKSPFTMWDFLQQRKRWLQGILLTVHSSKIAVVHKALLALSLYAWATMPLTSLQVFLCPLFPLPRCLPFDFLLSFVGALNLYMYIFGVVKSFSHKYRNSFLRLGMYLAGALMTIPFNILIENAAVLVGMFGRKDQFYIVNKDIQTV.

It belongs to the glycosyltransferase 2 family.

It is found in the cytoplasm. Its pathway is protein modification; protein glycosylation. Functionally, glycosyltransferase with a proposed role in glycosphingolipid biosynthesis. Involved in susceptibility to pore-forming crystal toxins in conjunction with bre-1, bre-2 and bre-4. Involved in resistance to the nematotoxic C.cinerea galectin Cgl2. Has a role in determining brood size. This chain is Beta-1,4-mannosyltransferase bre-3, found in Caenorhabditis briggsae.